Consider the following 619-residue polypeptide: Dynein axonemal intermediate chain 2 (619 aa).

WD repeat units lie at residues 214–254 (KPSS…LVAE), 261–302 (SHRD…EPTE), 362–401 (GHHGPIYALQRNPFYPKNFLTVGDWAARIWSEESRESSIM), 405–445 (YHMA…CDPA), and 450–489 (VCDDPLFCLRVQDTGCLIACGSELGTTTLLEVSSSLSTLQ). A disordered region spans residues 566–619 (EALKKKPKPKKASIEVEGEDELEDIAGEEEESGIIMGEDTGEDDMDEKNEGGAP). Positions 581 to 597 (VEGEDELEDIAGEEEES) are enriched in acidic residues.

This sequence belongs to the dynein intermediate chain family. Consists of at least two heavy chains and a number of intermediate and light chains. Interacts with DNAAF2. Interacts with DNAAF6/PIH1D3. Interacts with HEATR2; probably involved in outer arm dynein assembly. Interacts with CFAP53.

The protein localises to the cytoplasm. It is found in the cytoskeleton. Its subcellular location is the cilium axoneme. It localises to the dynein axonemal particle. Part of the dynein complex of respiratory cilia. The polypeptide is Dynein axonemal intermediate chain 2 (Dnai2) (Rattus norvegicus (Rat)).